The following is a 147-amino-acid chain: uncharacterized protein (147 aa).

One can recognise an HTH LytTR-type domain in the interval 44–147; sequence LVGYIDKEIH…LKSIKERLSI (104 aa).

It is found in the cytoplasm. This is an uncharacterized protein from Staphylococcus aureus (strain bovine RF122 / ET3-1).